The primary structure comprises 37 residues: Cytochrome b6-f complex subunit 5 (37 aa).

The helical transmembrane segment at 5–25 (LLSGIVLGLIPITLVGLFVTA) threads the bilayer.

The protein belongs to the PetG family. In terms of assembly, the 4 large subunits of the cytochrome b6-f complex are cytochrome b6, subunit IV (17 kDa polypeptide, PetD), cytochrome f and the Rieske protein, while the 4 small subunits are PetG, PetL, PetM and PetN. The complex functions as a dimer.

Its subcellular location is the plastid. It is found in the chloroplast thylakoid membrane. Component of the cytochrome b6-f complex, which mediates electron transfer between photosystem II (PSII) and photosystem I (PSI), cyclic electron flow around PSI, and state transitions. PetG is required for either the stability or assembly of the cytochrome b6-f complex. The protein is Cytochrome b6-f complex subunit 5 of Welwitschia mirabilis (Tree tumbo).